We begin with the raw amino-acid sequence, 196 residues long: Glycerol-3-phosphate acyltransferase (196 aa).

5 helical membrane passes run 2-22 (GWWL…SYLI), 51-71 (VVGG…VFIA), 80-100 (LVSL…FMKF), 112-132 (IIFC…LVIV), and 137-156 (YASL…GYLF).

The protein belongs to the PlsY family. Probably interacts with PlsX.

It is found in the cell inner membrane. The catalysed reaction is an acyl phosphate + sn-glycerol 3-phosphate = a 1-acyl-sn-glycero-3-phosphate + phosphate. It functions in the pathway lipid metabolism; phospholipid metabolism. Its function is as follows. Catalyzes the transfer of an acyl group from acyl-phosphate (acyl-PO(4)) to glycerol-3-phosphate (G3P) to form lysophosphatidic acid (LPA). This enzyme utilizes acyl-phosphate as fatty acyl donor, but not acyl-CoA or acyl-ACP. The polypeptide is Glycerol-3-phosphate acyltransferase (Thermotoga petrophila (strain ATCC BAA-488 / DSM 13995 / JCM 10881 / RKU-1)).